A 238-amino-acid chain; its full sequence is Protein odd-skipped-related 2 (238 aa).

The interval 105 to 126 (EDPPVTGQSRLSPERRPARGRL) is disordered. C2H2-type zinc fingers lie at residues 134 to 156 (FICR…ERTH), 162 to 184 (YTCD…RYIH), and 190 to 212 (FKCQ…KTLH).

It belongs to the Odd C2H2-type zinc-finger protein family. At the 8-somite stage, expressed in the pronephros, with weak generalized expression elsewhere. At 24 hpf, expressed in the kidney tubules and the anterior duct, and also in the gut. At 60 hpf, expressed in the tubules and the pectoral fin buds.

Its subcellular location is the nucleus. Functionally, transcriptional repressor. Required for pronephric kidney development. The protein is Protein odd-skipped-related 2 of Danio rerio (Zebrafish).